A 143-amino-acid chain; its full sequence is Peptide methionine sulfoxide reductase MsrB (143 aa).

Positions 5-127 constitute a MsrB domain; it reads NEELKKKLTP…NSAALRFIPK (123 aa). The Nucleophile role is filled by cysteine 116.

It belongs to the MsrB Met sulfoxide reductase family.

It catalyses the reaction L-methionyl-[protein] + [thioredoxin]-disulfide + H2O = L-methionyl-(R)-S-oxide-[protein] + [thioredoxin]-dithiol. The polypeptide is Peptide methionine sulfoxide reductase MsrB (Halalkalibacterium halodurans (strain ATCC BAA-125 / DSM 18197 / FERM 7344 / JCM 9153 / C-125) (Bacillus halodurans)).